Consider the following 153-residue polypeptide: Insulin-like growth factor 1 (153 aa).

Positions 49-77 (GPETLCGAELVDALQFVCGDRGFYFNKPT) are b. 3 disulfide bridges follow: cysteine 54/cysteine 96, cysteine 66/cysteine 109, and cysteine 95/cysteine 100. The c stretch occupies residues 78–89 (GYGSSSRRAPQT). Positions 90 to 110 (GIVDECCFRSCDLRRLEMYCA) are a. Positions 111–118 (PLKPAKSA) are d. A propeptide spans 119-153 (RSVRAQRHTDMPKAQKEVHLKNASRGSAGNKNYRM) (e peptide). Residues 120–153 (SVRAQRHTDMPKAQKEVHLKNASRGSAGNKNYRM) are disordered. The segment covering 125-138 (RHTDMPKAQKEVHL) has biased composition (basic and acidic residues). Residues 142-153 (SRGSAGNKNYRM) are compositionally biased toward polar residues.

The protein belongs to the insulin family. Forms a ternary complex with IGFR1 and ITGAV:ITGB3. Forms a ternary complex with IGFR1 and ITGA6:ITGB4. Forms a ternary complex with IGFBP3 and ALS.

Its subcellular location is the secreted. The insulin-like growth factors, isolated from plasma, are structurally and functionally related to insulin but have a much higher growth-promoting activity. May be a physiological regulator of [1-14C]-2-deoxy-D-glucose (2DG) transport and glycogen synthesis in osteoblasts. Stimulates glucose transport in bone-derived osteoblastic (PyMS) cells and is effective at much lower concentrations than insulin, not only regarding glycogen and DNA synthesis but also with regard to enhancing glucose uptake. May play a role in synapse maturation. Ca(2+)-dependent exocytosis of IGF1 is required for sensory perception of smell in the olfactory bulb. Acts as a ligand for IGF1R. Binds to the alpha subunit of IGF1R, leading to the activation of the intrinsic tyrosine kinase activity which autophosphorylates tyrosine residues in the beta subunit thus initiating a cascade of down-stream signaling events leading to activation of the PI3K-AKT/PKB and the Ras-MAPK pathways. Binds to integrins ITGAV:ITGB3 and ITGA6:ITGB4. Its binding to integrins and subsequent ternary complex formation with integrins and IGFR1 are essential for IGF1 signaling. Induces the phosphorylation and activation of IGFR1, MAPK3/ERK1, MAPK1/ERK2 and AKT1. As part of the MAPK/ERK signaling pathway, acts as a negative regulator of apoptosis in cardiomyocytes via promotion of STUB1/CHIP-mediated ubiquitination and degradation of ICER-type isoforms of CREM. This chain is Insulin-like growth factor 1, found in Canis lupus familiaris (Dog).